The chain runs to 207 residues: Probable molybdenum cofactor guanylyltransferase (207 aa).

GTP-binding positions include 9–11 (LAG), Lys21, and Asp97. Asp97 provides a ligand contact to Mg(2+).

This sequence belongs to the MobA family. Mg(2+) serves as cofactor.

The protein resides in the cytoplasm. The catalysed reaction is Mo-molybdopterin + GTP + H(+) = Mo-molybdopterin guanine dinucleotide + diphosphate. Functionally, transfers a GMP moiety from GTP to Mo-molybdopterin (Mo-MPT) cofactor (Moco or molybdenum cofactor) to form Mo-molybdopterin guanine dinucleotide (Mo-MGD) cofactor. This chain is Probable molybdenum cofactor guanylyltransferase, found in Trichormus variabilis (strain ATCC 29413 / PCC 7937) (Anabaena variabilis).